Here is a 267-residue protein sequence, read N- to C-terminus: 4-hydroxy-tetrahydrodipicolinate reductase (267 aa).

NAD(+) is bound by residues 8-13 (GAAGRM), Glu-34, 98-100 (GST), and 122-125 (APNM). The Proton donor/acceptor role is filled by His-155. His-156 lines the (S)-2,3,4,5-tetrahydrodipicolinate pocket. Catalysis depends on Lys-159, which acts as the Proton donor. 165-166 (GT) provides a ligand contact to (S)-2,3,4,5-tetrahydrodipicolinate.

The protein belongs to the DapB family.

The protein localises to the cytoplasm. The enzyme catalyses (S)-2,3,4,5-tetrahydrodipicolinate + NAD(+) + H2O = (2S,4S)-4-hydroxy-2,3,4,5-tetrahydrodipicolinate + NADH + H(+). The catalysed reaction is (S)-2,3,4,5-tetrahydrodipicolinate + NADP(+) + H2O = (2S,4S)-4-hydroxy-2,3,4,5-tetrahydrodipicolinate + NADPH + H(+). It participates in amino-acid biosynthesis; L-lysine biosynthesis via DAP pathway; (S)-tetrahydrodipicolinate from L-aspartate: step 4/4. In terms of biological role, catalyzes the conversion of 4-hydroxy-tetrahydrodipicolinate (HTPA) to tetrahydrodipicolinate. The chain is 4-hydroxy-tetrahydrodipicolinate reductase from Syntrophotalea carbinolica (strain DSM 2380 / NBRC 103641 / GraBd1) (Pelobacter carbinolicus).